A 617-amino-acid chain; its full sequence is Threonine--tRNA ligase (617 aa).

Positions 209–502 (DHRRLGKDLD…MTENYAGDFP (294 aa)) are catalytic. Zn(2+)-binding residues include C302, H353, and H479.

It belongs to the class-II aminoacyl-tRNA synthetase family. In terms of assembly, homodimer. It depends on Zn(2+) as a cofactor.

Its subcellular location is the cytoplasm. It catalyses the reaction tRNA(Thr) + L-threonine + ATP = L-threonyl-tRNA(Thr) + AMP + diphosphate + H(+). Catalyzes the attachment of threonine to tRNA(Thr) in a two-step reaction: L-threonine is first activated by ATP to form Thr-AMP and then transferred to the acceptor end of tRNA(Thr). Also edits incorrectly charged L-seryl-tRNA(Thr). This is Threonine--tRNA ligase from Synechococcus sp. (strain CC9311).